An 857-amino-acid chain; its full sequence is Protein dalmatian (857 aa).

2 disordered regions span residues 1–50 (MVRT…KLSI) and 146–194 (VQKS…FFHR). 2 stretches are compositionally biased toward polar residues: residues 146-156 (VQKSTQPQNIK) and 165-176 (SPCQQRIRSKSP). Phosphoserine is present on residues S173, S175, S184, and S222. Over residues 251-271 (GKPRAKRTAKKVRPVGNRRKV) the composition is skewed to basic residues. The tract at residues 251 to 281 (GKPRAKRTAKKVRPVGNRRKVSTKDNEPEPV) is disordered. S405 bears the Phosphoserine mark. Disordered stretches follow at residues 470-514 (SICP…NAEN) and 737-830 (PPRP…RDIE). Basic and acidic residues predominate over residues 771 to 781 (KQPRRTYVKER). Residues 797-806 (SESEDEDEQD) are compositionally biased toward acidic residues. The segment covering 807–816 (SHDKSLDSPE) has biased composition (basic and acidic residues). The span at 817-826 (KKRHHVKRPR) shows a compositional bias: basic residues.

The protein localises to the nucleus. Its subcellular location is the chromosome. Its function is as follows. Regulator of sister chromatid cohesion in mitosis. Probably involved in development of the central nervous system. In Drosophila melanogaster (Fruit fly), this protein is Protein dalmatian (dmt).